The primary structure comprises 155 residues: FHA domain-containing protein FhaB (155 aa).

The chain crosses the membrane as a helical span at residues 6–28; sequence LQLTRVGFLLLLWLFIWSVLRIL. A Phosphothreonine modification is found at threonine 36. An FHA domain is found at 83–132; that stretch reads VLIGRADDSTLVLTDDYASTRHARLSPRGSEWYVEDLGSTNGTYLDRAKV.

In terms of processing, phosphorylated by PknB. Dephosphorylated by PstP.

It is found in the cell membrane. This is FHA domain-containing protein FhaB (fhaB) from Mycolicibacterium smegmatis (strain ATCC 700084 / mc(2)155) (Mycobacterium smegmatis).